We begin with the raw amino-acid sequence, 940 residues long: Isoleucine--tRNA ligase (940 aa).

The 'HIGH' region signature appears at 58–68 (PYANGSIHIGH). Residue E564 participates in L-isoleucyl-5'-AMP binding. The 'KMSKS' region signature appears at 605–609 (KMSKS). K608 contacts ATP. Zn(2+)-binding residues include C903, C906, C923, and C926.

The protein belongs to the class-I aminoacyl-tRNA synthetase family. IleS type 1 subfamily. In terms of assembly, monomer. Zn(2+) serves as cofactor.

It is found in the cytoplasm. The catalysed reaction is tRNA(Ile) + L-isoleucine + ATP = L-isoleucyl-tRNA(Ile) + AMP + diphosphate. In terms of biological role, catalyzes the attachment of isoleucine to tRNA(Ile). As IleRS can inadvertently accommodate and process structurally similar amino acids such as valine, to avoid such errors it has two additional distinct tRNA(Ile)-dependent editing activities. One activity is designated as 'pretransfer' editing and involves the hydrolysis of activated Val-AMP. The other activity is designated 'posttransfer' editing and involves deacylation of mischarged Val-tRNA(Ile). This Shewanella oneidensis (strain ATCC 700550 / JCM 31522 / CIP 106686 / LMG 19005 / NCIMB 14063 / MR-1) protein is Isoleucine--tRNA ligase.